Here is a 441-residue protein sequence, read N- to C-terminus: Serine carboxypeptidase-like 2 (441 aa).

The N-terminal stretch at 1–29 (MANKYFSSVLKSLLLLLHLVFLSKQHVDS) is a signal peptide. Intrachain disulfides connect Cys88–Cys331, Cys252–Cys266, and Cys290–Cys297. N-linked (GlcNAc...) asparagine glycosylation occurs at Asn109. The active site involves Ser184. The N-linked (GlcNAc...) asparagine glycan is linked to Asn350. Residue Asp366 is part of the active site. A glycan (N-linked (GlcNAc...) asparagine) is linked at Asn382. His419 is an active-site residue.

This sequence belongs to the peptidase S10 family. Expressed in seedlings and roots.

The protein resides in the secreted. Functionally, probable carboxypeptidase. The polypeptide is Serine carboxypeptidase-like 2 (SCPL2) (Arabidopsis thaliana (Mouse-ear cress)).